The sequence spans 273 residues: MAALFLKKLTLQTVKTENYCIRRCLGKYILQGPAPTQQPPRPSCLIHAKAFSTEDTQDEMTKKKKNETAFSSVGRKINERIIHVLDEQGNDLGHMHRANVIRLMAERDLRLVKRDASAEPPQYQLLTGAQIHQERLRLREAERAAPKPGPTLTKELTFSSNIGQHDLDTKSKQIQQWIEKKYKVQITVKKGKSADEPEDKMEEMCNRIVQTMSGIATFSSRPQPIRGGKAVMCVLRPLSKKEEAAWKAAPDTPRRDALNGGDGKDGASGVLPQ.

Residues 1–32 (MAALFLKKLTLQTVKTENYCIRRCLGKYILQG) constitute a mitochondrion transit peptide. The propeptide at 33 to 92 (PAPTQQPPRPSCLIHAKAFSTEDTQDEMTKKKKNETAFSSVGRKINERIIHVLDEQGNDL) is removed in mature form. Residues 242-273 (EEAAWKAAPDTPRRDALNGGDGKDGASGVLPQ) are disordered. Over residues 252 to 265 (TPRRDALNGGDGKD) the composition is skewed to basic and acidic residues.

It belongs to the IF-3 family.

It is found in the mitochondrion. In terms of biological role, IF-3 binds to the 28S ribosomal subunit and shifts the equilibrium between 55S ribosomes and their 39S and 28S subunits in favor of the free subunits, thus enhancing the availability of 28S subunits on which protein synthesis initiation begins. In Bos taurus (Bovine), this protein is Translation initiation factor IF-3, mitochondrial (MTIF3).